Here is a 134-residue protein sequence, read N- to C-terminus: ATP synthase epsilon chain (134 aa).

It belongs to the ATPase epsilon chain family. F-type ATPases have 2 components, CF(1) - the catalytic core - and CF(0) - the membrane proton channel. CF(1) has five subunits: alpha(3), beta(3), gamma(1), delta(1), epsilon(1). CF(0) has three main subunits: a, b and c.

The protein resides in the cell inner membrane. Its function is as follows. Produces ATP from ADP in the presence of a proton gradient across the membrane. The polypeptide is ATP synthase epsilon chain (Rhizobium meliloti (strain 1021) (Ensifer meliloti)).